A 176-amino-acid polypeptide reads, in one-letter code: MDSQVRQNYHRDCEAAVNRMINMELFASYSYTSMAFYFSRDDVALPGFAHFFKENSEEEREHADKLLTFQNSRGGRIFLQDIKKPERDEWGSGLDALQSSLQLEKNVNQALLDLHKIASDHTDPHMCDFLETHYLNEQVESIKKLGDFITNLSRMDAVKNKMAEYLFDKHTMGGKN.

In terms of domain architecture, Ferritin-like diiron spans glutamine 7 to aspartate 156. Residues glutamate 24, glutamate 59, histidine 62, glutamate 104, and glutamine 138 each coordinate Fe cation.

It belongs to the ferritin family. As to quaternary structure, in liver, forms a heteromer consisting of middle and heavy subunits. In spleen, forms a homomer. The functional molecule forms a roughly spherical shell with a diameter of 12 nm and contains a central cavity into which the insoluble mineral iron core is deposited. Liver and spleen (at protein level).

It carries out the reaction 4 Fe(2+) + O2 + 4 H(+) = 4 Fe(3+) + 2 H2O. In terms of biological role, stores iron in a soluble, non-toxic, readily available form. Important for iron homeostasis. Has ferroxidase activity. Iron is taken up in the ferrous form and deposited as ferric hydroxides after oxidation. This Trematomus newnesi (Dusky notothen) protein is Ferritin, middle subunit.